We begin with the raw amino-acid sequence, 887 residues long: PAN2-PAN3 deadenylation complex subunit PAN3 (887 aa).

The C3H1-type zinc-finger motif lies at 43–71 (GVKLKYCRYYAKDKTCFYGEECQFLHEDP). Disordered stretches follow at residues 102 to 147 (AVAG…IPGM), 284 to 307 (QTPNPTASEFIPKGGSTSRLSNVS), and 325 to 392 (SPAT…SGQV). Residues 122–138 (PGTGAAAGGGGSSGGLD) are compositionally biased toward gly residues. The tract at residues 147 to 498 (MDGGALTDTS…PPPNRIQKSS (352 aa)) is necessary and sufficient for interaction with PABPC1 but not needed for interaction with PAN2. Residues 284–299 (QTPNPTASEFIPKGGS) carry the PABPC-interacting motif-2 (PAM-2) motif. The segment covering 298-307 (GSTSRLSNVS) has biased composition (polar residues). Phosphoserine occurs at positions 354 and 361. Residues 363 to 392 (TPNPASYMVPSSASTSVNNPVSQTPSSGQV) show a composition bias toward polar residues. The tract at residues 463–750 (QIDQADMPAV…SVNDIMPMIG (288 aa)) is pseudokinase domain. Residues R521, 570–577 (DFHAGGET), and 644–645 (TK) each bind ATP. Positions 751–789 (ARFYTQLDAAQMRNDVIEEDLAKEVQNGRLFRLLAKLGT) form a coiled coil. A knob domain region spans residues 790–887 (INERPEFQKD…ELIAAANGQL (98 aa)).

Belongs to the protein kinase superfamily. PAN3 family. Homodimer. Forms a heterotrimer with a catalytic subunit PAN2 to form the poly(A)-nuclease (PAN) deadenylation complex. Interacts (via PAM-2 motif) with poly(A)-binding protein PABPC1 (via PABC domain), conferring substrate specificity of the enzyme complex. Interacts with the GW182 family proteins TNRC6A, TNRC6B and TNRC6. Interacts with YTHDF3. As to quaternary structure, interacts with PAN2. Interacts (via N-terminus) with PABPC1 at lower efficiency than isoform 3. In terms of assembly, interacts with PAN2. Interacts (via N-terminus) with PABPC1 at higher efficiency than isoform 1.

Its subcellular location is the cytoplasm. The protein resides in the P-body. It localises to the nucleus. In terms of biological role, regulatory subunit of the poly(A)-nuclease (PAN) deadenylation complex, one of two cytoplasmic mRNA deadenylases involved in general and miRNA-mediated mRNA turnover. PAN specifically shortens poly(A) tails of RNA and the activity is stimulated by poly(A)-binding protein (PABP). PAN deadenylation is followed by rapid degradation of the shortened mRNA tails by the CCR4-NOT complex. Deadenylated mRNAs are then degraded by two alternative mechanisms, namely exosome-mediated 3'-5' exonucleolytic degradation, or deadenylation-dependent mRNA decapping and subsequent 5'-3' exonucleolytic degradation by XRN1. PAN3 acts as a regulator for PAN activity, recruiting the catalytic subunit PAN2 to mRNA via its interaction with RNA and PABP, and to miRNA targets via its interaction with GW182 family proteins. Its function is as follows. Decreases PAN2-mediated deadenylation, possibly by preventing progression into the second CCR4-NOT mediated stage of biphasic deadenylation. Has a significant effect on mRNA stability, generally stabilizing a subset of the transcriptome. Stabilizes mRNAs degraded by the AU-rich element (ARE)-mediated mRNA decay pathway but promotes degradation of mRNAs by the microRNA-mediated pathway. Its activity influences mRNP remodeling, specifically reducing formation of a subset of P-bodies containing GW220, an isoform of TNRC6A. Enhances PAN2 deadenylase activity and has an extensive effect on mRNA stability, generally enhancing mRNA decay across the transcriptome by multiple pathways, including the AU-rich element (ARE)-mediated pathway, microRNA-mediated pathway and the nonsense-mediated pathway (NMD). Its activity is required for efficient P-body formation. May be involved in regulating mRNAs of genes involved in cell cycle progression and cell proliferation. The sequence is that of PAN2-PAN3 deadenylation complex subunit PAN3 from Homo sapiens (Human).